Consider the following 372-residue polypeptide: Glutamate 5-kinase (372 aa).

Lysine 14 contributes to the ATP binding site. Residues serine 54, aspartate 141, and asparagine 153 each contribute to the substrate site. Residue threonine 173–aspartate 174 coordinates ATP. The region spanning arginine 280–serine 358 is the PUA domain.

It belongs to the glutamate 5-kinase family.

It is found in the cytoplasm. It carries out the reaction L-glutamate + ATP = L-glutamyl 5-phosphate + ADP. It participates in amino-acid biosynthesis; L-proline biosynthesis; L-glutamate 5-semialdehyde from L-glutamate: step 1/2. Catalyzes the transfer of a phosphate group to glutamate to form L-glutamate 5-phosphate. The sequence is that of Glutamate 5-kinase from Pseudomonas entomophila (strain L48).